The chain runs to 362 residues: MATETQIRIGVMGCADIARKVSRAIHLAPNATISGVASRSLEKAKAFATANNYPESTKIHGSYESLLEDPEIDALYVPLPTSLHVEWAIKAAEKGKHILLEKPVAMNVTEFDKIVDACEANGVQIMDGTMWVHNPRTALLKEFLSDSERFGQLKTVQSCFSFAGDEDFLKNDIRVKPGLDGLGALGDAGWYAIRATLLANNFELPKTVTAFPGAVLNEAGVILSCGASLSWEDGRTATIYCSFLANLTMEITAIGTKGTLRVHDFIIPYKETEASFTTSTKAWFNDLVTAWVSPPSEHTVKTELPQEACMVREFARLVGEIKNNGAKPDGYWPSISRKTQLVVDAVKESVDKNYQQISLSGR.

N-acetylalanine is present on Ala2.

It belongs to the Gfo/Idh/MocA family. As to quaternary structure, homodimer.

This is an uncharacterized protein from Arabidopsis thaliana (Mouse-ear cress).